Consider the following 503-residue polypeptide: Cobyric acid synthase (503 aa).

A GATase cobBQ-type domain is found at 251 to 450 (DLDIAVIRLP…IHGIFENAAF (200 aa)). Cys331 serves as the catalytic Nucleophile. Residue His442 is part of the active site.

It belongs to the CobB/CobQ family. CobQ subfamily.

It functions in the pathway cofactor biosynthesis; adenosylcobalamin biosynthesis. In terms of biological role, catalyzes amidations at positions B, D, E, and G on adenosylcobyrinic A,C-diamide. NH(2) groups are provided by glutamine, and one molecule of ATP is hydrogenolyzed for each amidation. The polypeptide is Cobyric acid synthase (Dehalococcoides mccartyi (strain CBDB1)).